The sequence spans 376 residues: Queuine tRNA-ribosyltransferase (376 aa).

Asp-93 (proton acceptor) is an active-site residue. Substrate is bound by residues 93 to 97, Asp-147, Gln-190, and Gly-217; that span reads DSGGF. Residues 248–254 are RNA binding; sequence GVGKPDD. Residue Asp-267 is the Nucleophile of the active site. Zn(2+) contacts are provided by Cys-305, Cys-307, Cys-310, and His-336.

This sequence belongs to the queuine tRNA-ribosyltransferase family. As to quaternary structure, homodimer. Within each dimer, one monomer is responsible for RNA recognition and catalysis, while the other monomer binds to the replacement base PreQ1. The cofactor is Zn(2+).

The enzyme catalyses 7-aminomethyl-7-carbaguanine + guanosine(34) in tRNA = 7-aminomethyl-7-carbaguanosine(34) in tRNA + guanine. It functions in the pathway tRNA modification; tRNA-queuosine biosynthesis. Functionally, catalyzes the base-exchange of a guanine (G) residue with the queuine precursor 7-aminomethyl-7-deazaguanine (PreQ1) at position 34 (anticodon wobble position) in tRNAs with GU(N) anticodons (tRNA-Asp, -Asn, -His and -Tyr). Catalysis occurs through a double-displacement mechanism. The nucleophile active site attacks the C1' of nucleotide 34 to detach the guanine base from the RNA, forming a covalent enzyme-RNA intermediate. The proton acceptor active site deprotonates the incoming PreQ1, allowing a nucleophilic attack on the C1' of the ribose to form the product. After dissociation, two additional enzymatic reactions on the tRNA convert PreQ1 to queuine (Q), resulting in the hypermodified nucleoside queuosine (7-(((4,5-cis-dihydroxy-2-cyclopenten-1-yl)amino)methyl)-7-deazaguanosine). The chain is Queuine tRNA-ribosyltransferase from Ruegeria pomeroyi (strain ATCC 700808 / DSM 15171 / DSS-3) (Silicibacter pomeroyi).